Consider the following 468-residue polypeptide: Ribulose bisphosphate carboxylase large chain (468 aa).

At Lys-5 the chain carries N6,N6,N6-trimethyllysine. Substrate is bound by residues Asn-114 and Thr-164. Lys-166 (proton acceptor) is an active-site residue. Lys-168 is a substrate binding site. Residues Lys-192, Asp-194, and Glu-195 each coordinate Mg(2+). Lys-192 is modified (N6-carboxylysine). His-285 serves as the catalytic Proton acceptor. Residues Arg-286, His-318, and Ser-370 each contribute to the substrate site.

It belongs to the RuBisCO large chain family. Type I subfamily. Heterohexadecamer of 8 large chains and 8 small chains; disulfide-linked. The disulfide link is formed within the large subunit homodimers. Mg(2+) serves as cofactor. Post-translationally, the disulfide bond which can form in the large chain dimeric partners within the hexadecamer appears to be associated with oxidative stress and protein turnover.

It is found in the plastid. The protein localises to the chloroplast. The enzyme catalyses 2 (2R)-3-phosphoglycerate + 2 H(+) = D-ribulose 1,5-bisphosphate + CO2 + H2O. It carries out the reaction D-ribulose 1,5-bisphosphate + O2 = 2-phosphoglycolate + (2R)-3-phosphoglycerate + 2 H(+). Functionally, ruBisCO catalyzes two reactions: the carboxylation of D-ribulose 1,5-bisphosphate, the primary event in carbon dioxide fixation, as well as the oxidative fragmentation of the pentose substrate in the photorespiration process. Both reactions occur simultaneously and in competition at the same active site. The protein is Ribulose bisphosphate carboxylase large chain of Solandra grandiflora (Chalice vine).